We begin with the raw amino-acid sequence, 410 residues long: Chaperonin GroEL (410 aa).

Residues 29–32 (TAGP), Lys-50, and 86–90 (DGTTT) each bind ATP.

It belongs to the chaperonin (HSP60) family. In terms of assembly, forms a cylinder of 14 subunits composed of two heptameric rings stacked back-to-back. Interacts with the co-chaperonin GroES.

The protein resides in the cytoplasm. The catalysed reaction is ATP + H2O + a folded polypeptide = ADP + phosphate + an unfolded polypeptide.. In terms of biological role, together with its co-chaperonin GroES, plays an essential role in assisting protein folding. The GroEL-GroES system forms a nano-cage that allows encapsulation of the non-native substrate proteins and provides a physical environment optimized to promote and accelerate protein folding. The sequence is that of Chaperonin GroEL from Ehrlichia canis.